We begin with the raw amino-acid sequence, 370 residues long: Putative FBD-associated F-box protein At1g50980 (370 aa).

The region spanning 31–77 is the F-box domain; sequence IRTISEFPDKVLLKILSLLPSKDVVATGVLSKRWRSLWKDVKTFRTS. The FBD domain maps to 292-343; that stretch reads LMGNQPDLIPKSLSSHLEILEWRQYNDTAQEREAAKYILANASGLRKATFYT.

This is Putative FBD-associated F-box protein At1g50980 from Arabidopsis thaliana (Mouse-ear cress).